Consider the following 228-residue polypeptide: Orotidine 5'-phosphate decarboxylase (228 aa).

Substrate contacts are provided by residues Asp-8, Lys-30, Asp-59–Thr-68, Thr-118, Arg-178, Gln-187, Gly-207, and Arg-208. Lys-61 (proton donor) is an active-site residue.

Belongs to the OMP decarboxylase family. Type 1 subfamily. Homodimer.

It carries out the reaction orotidine 5'-phosphate + H(+) = UMP + CO2. Its pathway is pyrimidine metabolism; UMP biosynthesis via de novo pathway; UMP from orotate: step 2/2. Catalyzes the decarboxylation of orotidine 5'-monophosphate (OMP) to uridine 5'-monophosphate (UMP). The sequence is that of Orotidine 5'-phosphate decarboxylase from Wolinella succinogenes (strain ATCC 29543 / DSM 1740 / CCUG 13145 / JCM 31913 / LMG 7466 / NCTC 11488 / FDC 602W) (Vibrio succinogenes).